The chain runs to 1291 residues: 1-phosphatidylinositol 4,5-bisphosphate phosphodiesterase gamma-1 (1291 aa).

The residue at position 2 (Ala2) is an N-acetylalanine. In terms of domain architecture, PH 1 spans 27–142; that stretch reads RSLEVGTVMT…WIRGLTWLME (116 aa). Positions 152–187 constitute an EF-hand domain; the sequence is QIERWLRKQFYSVDRNREDRISAKDLKNMLSQVNYR. The Ca(2+) site is built by Asp165, Asn167, Glu169, Arg171, and Asp176. A PI-PLC X-box domain is found at 320–464; it reads DTMNNPLSHY…LKRKILIKHK (145 aa). Catalysis depends on residues His335 and His380. In terms of domain architecture, PH 2; first part spans 489 to 523; that stretch reads SIKNGILYLEDPVNHEWYPHYFVLTSSKIYYSEET. A Phosphotyrosine modification is found at Tyr506. The segment at 522–544 is disordered; that stretch reads ETSSDQGNEDEEEPKEASGSTEL. SH2 domains are found at residues 550-657 and 668-756; these read WFHG…SEPV and WYHA…RYPI. Tyr771 is subject to Phosphotyrosine; by SYK. Phosphotyrosine occurs at positions 775 and 783. Tyr783 is modified (phosphotyrosine; by ITK, SYK and TXK). Residues 791–851 form the SH3 domain; that stretch reads TFKCAVKALF…PSNYVEEMVS (61 aa). Residues 895–931 form the PH 2; second part domain; the sequence is FVFSISMASVAHWSLDVAADSQEELQDWVKKIREVAQ. Residues 953 to 1070 form the PI-PLC Y-box domain; it reads LSELVVYCRP…GYVLQPSVMR (118 aa). Tyr977 bears the Phosphotyrosine mark. Residues 1071-1194 form the C2 domain; it reads DEAFDPFDKS…TGYRAVPLKN (124 aa). Ser1222, Ser1228, and Ser1249 each carry phosphoserine. A Phosphotyrosine modification is found at Tyr1254. A Phosphoserine modification is found at Ser1264. Residues 1271-1291 form a disordered region; sequence HFDGRDRRTPRRTRVNGDNRL.

Interacts with AGAP2 via its SH3 domain. Interacts (via SH2 domain) with RET. Interacts with FLT1 (tyrosine-phosphorylated). Interacts (via SH2 domain) with FGFR1, FGFR2, FGFR3 and FGFR4 (phosphorylated). Interacts with LAT (phosphorylated) upon TCR activation. Interacts (via SH3 domain) with the Pro-rich domain of TNK1. Associates with BLNK, VAV1, GRB2 and NCK1 in a B-cell antigen receptor-dependent fashion. Interacts with CBLB in activated T-cells; which inhibits phosphorylation. Interacts with SHB. Interacts (via SH3 domain) with the Arg/Gly-rich-flanked Pro-rich domains of KHDRBS1/SAM68. This interaction is selectively regulated by arginine methylation of KHDRBS1/SAM68. Interacts with INPP5D/SHIP1, THEMIS and CLNK. Interacts with AXL, FLT4 and KIT. Interacts with RALGPS1. Interacts (via the SH2 domains) with VIL1 (phosphorylated at C-terminus tyrosine phosphorylation sites). Interacts (via SH2 domain) with PDGFRA and PDGFRB (tyrosine phosphorylated). Interacts with PIP5K1C. Interacts with NTRK1 and NTRK2 (phosphorylated upon ligand-binding). Interacts with SYK; activates PLCG1. Interacts with GRB2, LAT and THEMIS upon TCR activation in thymocytes. Interacts with TESPA1; the association is increased with prolonged stimulation of the TCR and may facilitate the assembly of the LAT signalosome. Interacts (via C-terminal proline-rich domain (PRD)) with PLCG1 (via SH3 domain); this interaction leads to guanine nucleotide exchange from PlCG1 to DNM1 and enhances DNM1-dependent endocytosis. The cofactor is Ca(2+). Post-translationally, ubiquitinated by CBLB in activated T-cells. Tyrosine phosphorylated in response to signaling via activated FLT3, KIT and PDGFRA. Tyrosine phosphorylated by activated FGFR1, FGFR2, FGFR3 and FGFR4. Tyrosine phosphorylated by activated FLT1 and KDR. Tyrosine phosphorylated by activated PDGFRB. The receptor-mediated activation of PLCG1 involves its phosphorylation by tyrosine kinases, in response to ligation of a variety of growth factor receptors and immune system receptors. For instance, SYK phosphorylates and activates PLCG1 in response to ligation of the B-cell receptor. May be dephosphorylated by PTPRJ. Phosphorylated by ITK and TXK on Tyr-783 upon TCR activation in T-cells.

The protein resides in the cell projection. The protein localises to the lamellipodium. Its subcellular location is the ruffle. The enzyme catalyses a 1,2-diacyl-sn-glycero-3-phospho-(1D-myo-inositol-4,5-bisphosphate) + H2O = 1D-myo-inositol 1,4,5-trisphosphate + a 1,2-diacyl-sn-glycerol + H(+). It carries out the reaction a 1,2-diacyl-sn-glycero-3-phospho-(1D-myo-inositol) + H2O = 1D-myo-inositol 1-phosphate + a 1,2-diacyl-sn-glycerol + H(+). Activated by phosphorylation on tyrosine residues. Its function is as follows. Mediates the production of the second messenger molecules diacylglycerol (DAG) and inositol 1,4,5-trisphosphate (IP3). Plays an important role in the regulation of intracellular signaling cascades. Becomes activated in response to ligand-mediated activation of receptor-type tyrosine kinases, such as PDGFRA, PDGFRB, EGFR, FGFR1, FGFR2, FGFR3 and FGFR4. Plays a role in actin reorganization and cell migration. Guanine nucleotide exchange factor that binds the GTPase DNM1 and catalyzes the dissociation of GDP, allowing a GTP molecule to bind in its place, therefore enhancing DNM1-dependent endocytosis. This is 1-phosphatidylinositol 4,5-bisphosphate phosphodiesterase gamma-1 from Bos taurus (Bovine).